The primary structure comprises 105 residues: Large ribosomal subunit protein bL21c (105 aa).

It belongs to the bacterial ribosomal protein bL21 family. Part of the 50S ribosomal subunit.

The protein resides in the plastid. It is found in the chloroplast. Its function is as follows. This protein binds to 23S rRNA. This is Large ribosomal subunit protein bL21c from Thalassiosira pseudonana (Marine diatom).